The primary structure comprises 473 residues: Fumarate hydratase class II (473 aa).

Substrate-binding positions include 104 to 106, 128 to 131, 138 to 140, and Thr-186; these read SGT, HPND, and SSN. The active-site Proton donor/acceptor is His-187. Ser-318 is a catalytic residue. Substrate contacts are provided by residues Ser-319 and 324–326; that span reads KVN.

It belongs to the class-II fumarase/aspartase family. Fumarase subfamily. Homotetramer.

Its subcellular location is the cytoplasm. The catalysed reaction is (S)-malate = fumarate + H2O. It functions in the pathway carbohydrate metabolism; tricarboxylic acid cycle; (S)-malate from fumarate: step 1/1. Involved in the TCA cycle. Catalyzes the stereospecific interconversion of fumarate to L-malate. The chain is Fumarate hydratase class II from Corynebacterium efficiens (strain DSM 44549 / YS-314 / AJ 12310 / JCM 11189 / NBRC 100395).